The sequence spans 243 residues: Triosephosphate isomerase (243 aa).

9–11 (NWK) lines the substrate pocket. H96 functions as the Electrophile in the catalytic mechanism. The active-site Proton acceptor is the E165. Substrate is bound by residues G171, S204, and 225–226 (GG).

It belongs to the triosephosphate isomerase family. As to quaternary structure, homodimer.

The protein localises to the cytoplasm. It carries out the reaction D-glyceraldehyde 3-phosphate = dihydroxyacetone phosphate. It functions in the pathway carbohydrate biosynthesis; gluconeogenesis. It participates in carbohydrate degradation; glycolysis; D-glyceraldehyde 3-phosphate from glycerone phosphate: step 1/1. In terms of biological role, involved in the gluconeogenesis. Catalyzes stereospecifically the conversion of dihydroxyacetone phosphate (DHAP) to D-glyceraldehyde-3-phosphate (G3P). The sequence is that of Triosephosphate isomerase from Prochlorococcus marinus (strain MIT 9211).